The chain runs to 366 residues: Phospho-N-acetylmuramoyl-pentapeptide-transferase (366 aa).

The next 10 membrane-spanning stretches (helical) occupy residues 3-23 (QIFI…PVLI), 55-75 (IAIL…GLVF), 80-100 (PGVS…VGFA), 118-138 (AKLI…LQFP), 161-181 (IAVG…NIVI), 197-217 (LASG…FWQF), 235-255 (PLDL…FLWW), 262-282 (IFMG…LSIT), 287-307 (LLMI…VIQV), and 341-361 (FWLL…GEWL).

Belongs to the glycosyltransferase 4 family. MraY subfamily. Mg(2+) serves as cofactor.

Its subcellular location is the cell membrane. It catalyses the reaction UDP-N-acetyl-alpha-D-muramoyl-L-alanyl-gamma-D-glutamyl-meso-2,6-diaminopimeloyl-D-alanyl-D-alanine + di-trans,octa-cis-undecaprenyl phosphate = di-trans,octa-cis-undecaprenyl diphospho-N-acetyl-alpha-D-muramoyl-L-alanyl-D-glutamyl-meso-2,6-diaminopimeloyl-D-alanyl-D-alanine + UMP. It functions in the pathway cell wall biogenesis; peptidoglycan biosynthesis. In terms of biological role, catalyzes the initial step of the lipid cycle reactions in the biosynthesis of the cell wall peptidoglycan: transfers peptidoglycan precursor phospho-MurNAc-pentapeptide from UDP-MurNAc-pentapeptide onto the lipid carrier undecaprenyl phosphate, yielding undecaprenyl-pyrophosphoryl-MurNAc-pentapeptide, known as lipid I. This is Phospho-N-acetylmuramoyl-pentapeptide-transferase from Corynebacterium urealyticum (strain ATCC 43042 / DSM 7109).